A 641-amino-acid chain; its full sequence is MSTGAQTKAAAASQHADGPRLLADVGGTNARFALETGPGEITQIRVYPGAEYPTLTDAIRKYLKDAKIGRVNHAAIAIANPVDGDQVRMTNHNWSFSIEATRRALGFDTLLVVNDFTALAMALPGLTDAQRVQIGGGTRRQNSVIGLMGPGTGLGVSGLIPADDRWIALGSEGGHATFAPMDEREDLVLQYARRKYPHVSFERVCAGPGMEIIYRALAARDKKRIAANVDTADIVERAHAGDALALEAVECFCAILGTFAGNLAVTLGALGGIYIGGGVVPKLGELFMRSPFRARFEAKGRFEAYLANIPTYLITAEYPAFLGVSAILAEQLSNRTGGASSAVFERIRQMRDALTPAERRVADLALNHPRSIINDPIVDIARKADVSQPTVIRFCRSLGCQGLSDFKLKLATGLTGTIPMSHSQVHLGDTATDFGAKVLDNTVSAILQLREHLNFEHVEQAIDILNNARRIEFYGLGNSNIVAQDAHYKFFRFGIPTIAYGDLYMQAASAALLGKGDVIVAVSKSGRAPELLRVLDVAMQAGAKVIAITSSNTPLAKRATVALETDHIEMRESQLSMISRILHLVMIDILAVGVAIRRAAPNAELAEAMARAKARAGASAGDEAADVLDWLSHGAAPAAKD.

The tract at residues 1–340 (MSTGAQTKAA…QLSNRTGGAS (340 aa)) is glucokinase. Residue 23–28 (ADVGGT) participates in ATP binding. Residues 341 to 417 (SAVFERIRQM…LKLATGLTGT (77 aa)) enclose the HTH rpiR-type domain. A putative HTH-type transcriptional regulator region spans residues 341-641 (SAVFERIRQM…SHGAAPAAKD (301 aa)). A DNA-binding region (H-T-H motif) is located at residues 377-396 (IVDIARKADVSQPTVIRFCR). An SIS domain is found at 461–600 (AIDILNNARR…AVGVAIRRAA (140 aa)). A helical transmembrane segment spans residues 576-596 (SMISRILHLVMIDILAVGVAI).

This sequence in the N-terminal section; belongs to the bacterial glucokinase family.

The protein localises to the membrane. The enzyme catalyses D-glucose + ATP = D-glucose 6-phosphate + ADP + H(+). This chain is Bifunctional protein glk (glk), found in Burkholderia pseudomallei (strain 1710b).